The chain runs to 875 residues: GATOR2 complex protein MIOS (875 aa).

6 WD repeats span residues 58–100 (SDTP…NSKF), 111–155 (KHAR…TPDI), 182–221 (GQND…QKMF), 223–261 (NTKA…KPVL), 265–306 (EQPK…TPIG), and 395–437 (RLRA…KQYT). The C4-type zinc-finger motif lies at 735 to 781 (VSCNFCGKSISYSCSAVPHQGRGFSQYGVSGSPTKSKVTSCPGCRKP). Zn(2+) is bound by residues C737 and C740. Phosphoserine occurs at positions 759 and 766. Zn(2+)-binding residues include C775, C778, C788, C827, C830, H832, H835, H838, C849, C854, and C858. An RING-type; atypical zinc finger spans residues 782–863 (LPRCALCLIN…CTCKCMQLDT (82 aa)).

The protein belongs to the WD repeat mio family. As to quaternary structure, component of the GATOR2 subcomplex, composed of MIOS, SEC13, SEH1L, WDR24 and WDR59. The GATOR2 complex interacts with CASTOR1 and CASTOR2; the interaction is negatively regulated by arginine. CASTOR1 and CASTOR2 convey leucine availability via direct interaction with MIOS. The GATOR2 complex interacts with SESN1, SESN2 and SESN3; the interaction is negatively regulated by amino acids. Interacts with SAR1A and SAR1B; the interaction is direct, disrupted by leucine and mediates the interaction of SAR1A or SAR1B with the GATOR2 complex to negatively regulate the TORC1 signaling upon leucine deprivation.

It localises to the lysosome membrane. With respect to regulation, the GATOR2 complex is negatively regulated by the upstream amino acid sensors CASTOR1 and SESN2, which sequester the GATOR2 complex in absence of amino acids. In the presence of abundant amino acids, GATOR2 is released from CASTOR1 and SESN2 and activated. Functionally, as a component of the GATOR2 complex, functions as an activator of the amino acid-sensing branch of the mTORC1 signaling pathway. The GATOR2 complex indirectly activates mTORC1 through the inhibition of the GATOR1 subcomplex. GATOR2 probably acts as an E3 ubiquitin-protein ligase toward GATOR1. In the presence of abundant amino acids, the GATOR2 complex mediates ubiquitination of the NPRL2 core component of the GATOR1 complex, leading to GATOR1 inactivation. In the absence of amino acids, GATOR2 is inhibited, activating the GATOR1 complex. Within the GATOR2 complex, MIOS is required to prevent autoubiquitination of WDR24, the catalytic subunit of the complex. The GATOR2 complex is required for brain myelination. The chain is GATOR2 complex protein MIOS from Homo sapiens (Human).